We begin with the raw amino-acid sequence, 223 residues long: 7-carboxy-7-deazaguanine synthase (223 aa).

Residues 12 to 14 (LQG) and arginine 27 contribute to the substrate site. The Radical SAM core domain maps to 18 to 223 (FTGVPAIFIR…MQTHKYLNIA (206 aa)). [4Fe-4S] cluster-binding residues include cysteine 31, cysteine 35, and cysteine 38. Residue threonine 40 participates in Mg(2+) binding. Substrate is bound at residue threonine 92. S-adenosyl-L-methionine contacts are provided by residues glycine 94 and 136-138 (SPK).

It belongs to the radical SAM superfamily. 7-carboxy-7-deazaguanine synthase family. Homodimer. [4Fe-4S] cluster is required as a cofactor. S-adenosyl-L-methionine serves as cofactor. The cofactor is Mg(2+).

It catalyses the reaction 6-carboxy-5,6,7,8-tetrahydropterin + H(+) = 7-carboxy-7-deazaguanine + NH4(+). It functions in the pathway purine metabolism; 7-cyano-7-deazaguanine biosynthesis. Functionally, catalyzes the complex heterocyclic radical-mediated conversion of 6-carboxy-5,6,7,8-tetrahydropterin (CPH4) to 7-carboxy-7-deazaguanine (CDG), a step common to the biosynthetic pathways of all 7-deazapurine-containing compounds. This chain is 7-carboxy-7-deazaguanine synthase, found in Escherichia coli (strain K12).